We begin with the raw amino-acid sequence, 88 residues long: Yop proteins translocation protein S (88 aa).

2 helical membrane passes run 15–35 (WLVL…GTLV) and 49–69 (LGFV…ASWL).

It belongs to the FliQ/MopD/SpaQ family.

Its subcellular location is the cell membrane. Functionally, component of the Yop secretion machinery. This chain is Yop proteins translocation protein S (yscS), found in Yersinia pestis.